We begin with the raw amino-acid sequence, 320 residues long: Heterogeneous nuclear ribonucleoprotein A1 (320 aa).

Met-1 carries the post-translational modification N-acetylmethionine. N-acetylserine; in Heterogeneous nuclear ribonucleoprotein A1, N-terminally processed is present on Ser-2. The residue at position 2 (Ser-2) is a Phosphoserine. The residue at position 3 (Lys-3) is an N6-acetyllysine; alternate. Residue Lys-3 forms a Glycyl lysine isopeptide (Lys-Gly) (interchain with G-Cter in SUMO2); alternate linkage. 2 positions are modified to phosphoserine: Ser-4 and Ser-6. The segment at 4–94 (SESPKEPEQL…EPKRAVSRED (91 aa)) is globular A domain. A Glycyl lysine isopeptide (Lys-Gly) (interchain with G-Cter in SUMO2) cross-link involves residue Lys-8. 2 RRM domains span residues 14–97 (RKLF…DSQR) and 105–184 (KKIF…LSKQ). Phosphoserine is present on Ser-22. A Glycyl lysine isopeptide (Lys-Gly) (interchain with G-Cter in SUMO2) cross-link involves residue Lys-78. The tract at residues 95–185 (SQRPGAHLTV…EVRKALSKQE (91 aa)) is globular B domain. Residue Lys-113 forms a Glycyl lysine isopeptide (Lys-Gly) (interchain with G-Cter in SUMO) linkage. Residues Lys-179 and Lys-183 each participate in a glycyl lysine isopeptide (Lys-Gly) (interchain with G-Cter in SUMO2) cross-link. The interval 182–216 (SKQEMASASSSQRGRSGSGNFGGGRGGGFGGNDNF) is disordered. The residue at position 192 (Ser-192) is a Phosphoserine; by MKNK2. Arg-194 is subject to Asymmetric dimethylarginine; alternate. Dimethylated arginine; alternate is present on Arg-194. At Arg-194 the chain carries Omega-N-methylarginine; alternate. Gly residues predominate over residues 197-216 (SGSGNFGGGRGGGFGGNDNF). At Ser-199 the chain carries Phosphoserine. An asymmetric dimethylarginine; alternate mark is found at Arg-206, Arg-218, Arg-225, and Arg-232. Arg-206 carries the post-translational modification Dimethylated arginine; alternate. Arg-206, Arg-218, Arg-225, and Arg-232 each carry omega-N-methylarginine; alternate. The tract at residues 218–240 (RGGNFSGRGGFGGSRGGGGYGGS) is RNA-binding RGG-box. Position 225 is a dimethylated arginine; alternate (Arg-225). Positions 268–305 (NQSSNFGPMKGGNFGGRSLGPYGGGGQYFAKPRNQGGY) are nuclear targeting sequence. Residues 277–294 (KGGNFGGRSLGPYGGGGQ) show a composition bias toward gly residues. The segment at 277–320 (KGGNFGGRSLGPYGGGGQYFAKPRNQGGYGGSSSSSSYGSGRRF) is disordered. An Omega-N-methylarginine modification is found at Arg-284. Residue Ser-285 is modified to Phosphoserine. Lys-298 is modified (N6-acetyllysine; alternate). Lys-298 is covalently cross-linked (Glycyl lysine isopeptide (Lys-Gly) (interchain with G-Cter in SUMO2); alternate). Arg-300 carries the post-translational modification Omega-N-methylarginine. The span at 308–320 (SSSSSSYGSGRRF) shows a compositional bias: low complexity. Position 309 is a phosphoserine (Ser-309). A phosphoserine; by MKNK2 mark is found at Ser-310, Ser-311, and Ser-312. Ser-313 and Ser-316 each carry phosphoserine. Arg-318 bears the Omega-N-methylarginine mark.

Identified in the spliceosome C complex. Identified in a IGF2BP1-dependent mRNP granule complex containing untranslated mRNAs. Interacts with SEPT6, C9orf72, KHDRBS1, UBQLN2. Interacts with PPIA/CYPA. Post-translationally, sumoylated.

The protein localises to the nucleus. The protein resides in the cytoplasm. Involved in the packaging of pre-mRNA into hnRNP particles, transport of poly(A) mRNA from the nucleus to the cytoplasm and modulation of splice site selection. Plays a role in the splicing of pyruvate kinase PKM by binding repressively to sequences flanking PKM exon 9, inhibiting exon 9 inclusion and resulting in exon 10 inclusion and production of the PKM M2 isoform. Binds to the IRES and thereby inhibits the translation of the apoptosis protease activating factor APAF1. May bind to specific miRNA hairpins. The protein is Heterogeneous nuclear ribonucleoprotein A1 (HNRNPA1) of Macaca mulatta (Rhesus macaque).